A 1054-amino-acid polypeptide reads, in one-letter code: Calcium-transporting ATPase 2, endoplasmic reticulum-type (1054 aa).

The Cytoplasmic segment spans residues 1–53 (MEEEKSFSAWSWSVEQCLKEYKTRLDKGLTSEDVQIRRQKYGFNELAKEKGKP). The helical transmembrane segment at 54-74 (LWHLVLEQFDDTLVKILLGAA) threads the bilayer. At 75-98 (FISFVLAFLGEEHGSGSGFEAFVE) the chain is on the lumenal side. Residues 99-118 (PFVIVLILILNAVVGVWQES) traverse the membrane as a helical segment. Residues 119–262 (NAEKALEALK…ESETPLKKKL (144 aa)) are Cytoplasmic-facing. The chain crosses the membrane as a helical span at residues 263–282 (DEFGSRLTTAICIVCVLVWM). Residues 283 to 312 (INYKNFVSWDVVDGYKPVNIKFSFEKCTYY) are Lumenal-facing. The chain crosses the membrane as a helical span at residues 313 to 330 (FKIAVALAVAAIPEGLPA). Positions 321, 322, 324, and 326 each coordinate Ca(2+). The Cytoplasmic portion of the chain corresponds to 331 to 782 (VITTCLALGT…AEGRSIYNNM (452 aa)). D368 functions as the 4-aspartylphosphate intermediate in the catalytic mechanism. Mg(2+)-binding residues include D727 and D731. A helical membrane pass occupies residues 783-802 (KAFIRYMISSNVGEVISIFL). Residues N793 and E796 each coordinate Ca(2+). Topologically, residues 803 to 812 (TAALGIPECM) are lumenal. A helical transmembrane segment spans residues 813–833 (IPVQLLWVNLVTDGPPATALG). Residues N821, T824, and D825 each contribute to the Ca(2+) site. Residues 834 to 853 (FNPADIDIMKKPPRKSDDCL) are Cytoplasmic-facing. The chain crosses the membrane as a helical span at residues 854 to 876 (IDSWVLIRYLVIGSYVGVATVGI). The Lumenal portion of the chain corresponds to 877–949 (FVLWYTQASF…YFTLGKVKPM (73 aa)). A helical transmembrane segment spans residues 950–969 (TLSLTVLVAIEMFNSLNALS). Position 960 (E960) interacts with Ca(2+). The Cytoplasmic segment spans residues 970-982 (EDNSLLTMPPWRN). A helical transmembrane segment spans residues 983 to 1001 (PWLLVAMTVSFALHCVILY). Over 1002–1016 (VPFLANVFGIVPLSF) the chain is Lumenal. A helical membrane pass occupies residues 1017 to 1037 (REWFVVILVSFPVILIDEALK). At 1038-1054 (FIGRCRRTRIKKKIKTM) the chain is on the cytoplasmic side.

It belongs to the cation transport ATPase (P-type) (TC 3.A.3) family. Type IIA subfamily.

It is found in the membrane. The enzyme catalyses Ca(2+)(in) + ATP + H2O = Ca(2+)(out) + ADP + phosphate + H(+). This magnesium-dependent enzyme catalyzes the hydrolysis of ATP coupled with the translocation of calcium from the cytosol to an endomembrane compartment. This is Calcium-transporting ATPase 2, endoplasmic reticulum-type (ECA2) from Arabidopsis thaliana (Mouse-ear cress).